The following is a 351-amino-acid chain: ATP-dependent 6-phosphofructokinase subunit gamma (351 aa).

As to quaternary structure, heterododecamer of 4 alpha, 4 beta and 4 gamma chains. The gamma chain bridges the N-terminal halves of the alpha and beta subunits.

The protein resides in the cytoplasm. Its pathway is carbohydrate degradation; glycolysis; D-glyceraldehyde 3-phosphate and glycerone phosphate from D-glucose: step 3/4. Structural subunit of pyrophosphate--fructose 6-phosphate 1-phosphotransferase. Not required for catalytic activity. Fine-tunes allosteric regulation of the ATP-PFK by ATP, fructose 2,6-bisphosphate and AMP. This chain is ATP-dependent 6-phosphofructokinase subunit gamma (PFK3), found in Komagataella phaffii (strain GS115 / ATCC 20864) (Yeast).